The sequence spans 351 residues: Formyl peptide receptor 2 (351 aa).

Residues 1 to 29 (MESNYSIHLNGSEVVVYDSTISRVLWILS) are Extracellular-facing. Asn4 and Asn10 each carry an N-linked (GlcNAc...) asparagine glycan. Residues 30 to 50 (MVVVSITFFLGVLGNGLVIWV) form a helical membrane-spanning segment. Over 51–61 (AGFRMPHTVTT) the chain is Cytoplasmic. A helical membrane pass occupies residues 62–82 (IWYLNLALADFSFTATLPFLL). Over 83–99 (VEMAMKEKWPFGWFLCK) the chain is Extracellular. An intrachain disulfide couples Cys98 to Cys176. The helical transmembrane segment at 100-120 (LVHIVVDVNLFGSVFLIALIA) threads the bilayer. Residues 121-144 (LDRCICVLHPVWAQNHRTVSLARK) lie on the Cytoplasmic side of the membrane. The chain crosses the membrane as a helical span at residues 145–165 (VVVGPWIFALILTLPIFIFLT). The Extracellular portion of the chain corresponds to 166–205 (TVRIPGGDVYCTFNFGSWAQTDEEKLNTAITFVTTRGIIR). Residues 206–226 (FLIGFSMPMSIVAVCYGLIAV) traverse the membrane as a helical segment. Residues 227–241 (KINRRNLVNSSRPLR) are Cytoplasmic-facing. The chain crosses the membrane as a helical span at residues 242-262 (VLTAVVASFFICWFPFQLVAL). The Extracellular portion of the chain corresponds to 263–282 (LGTVWFKETLLSGSYKILDM). The helical transmembrane segment at 283–305 (FVNPTSSLAYFNSCLNPMLYVFM) threads the bilayer. Topologically, residues 306–351 (GQDFRERFIHSLPYSLERALSEDSGQTSDSSTSSTSPPADIELKAP) are cytoplasmic. The disordered stretch occupies residues 325 to 351 (LSEDSGQTSDSSTSSTSPPADIELKAP). A compositionally biased stretch (low complexity) spans 327-341 (EDSGQTSDSSTSSTS).

It belongs to the G-protein coupled receptor 1 family. Interacts with Amyloid-beta protein 42, product of APP; the interaction takes place at the cell surface and the complex is then rapidly internalized. As to expression, primarily expressed in neutrophils. Not detected in vomeronasal neurons.

The protein localises to the cell membrane. Functionally, high affinity receptor for N-formyl-methionyl peptides (FMLP), which are powerful neutrophil chemotactic factors. Stimulates chemotaxis in immune cells to site of infection or tissue damage upon recognition of several ligands, such as FMLP, or ligand involved in cell damage, disease or inflammation. Receptor for the chemokine-like protein FAM19A5, mediating FAM19A5-stimulated macrophage chemotaxis and the inhibitory effect on TNFSF11/RANKL-induced osteoclast differentiation. This chain is Formyl peptide receptor 2 (Fpr2), found in Mus musculus (Mouse).